The chain runs to 142 residues: ATP synthase epsilon chain (142 aa).

It belongs to the ATPase epsilon chain family. In terms of assembly, F-type ATPases have 2 components, CF(1) - the catalytic core - and CF(0) - the membrane proton channel. CF(1) has five subunits: alpha(3), beta(3), gamma(1), delta(1), epsilon(1). CF(0) has three main subunits: a, b and c.

Its subcellular location is the cell inner membrane. In terms of biological role, produces ATP from ADP in the presence of a proton gradient across the membrane. The sequence is that of ATP synthase epsilon chain from Shewanella loihica (strain ATCC BAA-1088 / PV-4).